The following is a 192-amino-acid chain: Thymidine kinase (192 aa).

ATP-binding positions include 9 to 16 and 87 to 90; these read SAMNAGKS and DECQ. E88 (proton acceptor) is an active-site residue. Zn(2+) is bound by residues C145, C147, C182, and H185.

The protein belongs to the thymidine kinase family. As to quaternary structure, homotetramer.

It is found in the cytoplasm. The catalysed reaction is thymidine + ATP = dTMP + ADP + H(+). This is Thymidine kinase from Vibrio vulnificus (strain YJ016).